The chain runs to 438 residues: Polycomb protein eed-A (438 aa).

The interval 1 to 67 (MSEASGRAAG…NAPGRKAWGK (67 aa)) is disordered. Over residues 40–57 (SIESGTNTERPDTPTNAA) the composition is skewed to polar residues. WD repeat units lie at residues 88-131 (DHNQ…DIRL), 139-182 (DADE…CIKH), 185-225 (GHGN…LVAI), 231-270 (GHRD…MKTA), 301-338 (IHRN…DDID), 356-396 (SQCD…PHKA), and 405-438 (KCAS…DRLR).

It belongs to the WD repeat ESC family. Component of the prc2/eed-ezh2 complex. Interacts with yy1. Can interact with ezh2, hdac1 and taf9.

The protein resides in the nucleus. Functionally, polycomb group (PcG) protein. Component of the prc2/eed-ezh2 complex, which methylates 'Lys-9' and 'Lys-27' of histone H3, leading to transcriptional repression of the affected target gene. The protein is Polycomb protein eed-A (eed-a) of Xenopus laevis (African clawed frog).